Here is a 539-residue protein sequence, read N- to C-terminus: GMP synthase [glutamine-hydrolyzing] (539 aa).

Residues 4 to 202 enclose the Glutamine amidotransferase type-1 domain; it reads KILILDFGSQ…VLQIAGAKPD (199 aa). The active-site Nucleophile is C81. Residues H176 and E178 contribute to the active site. The GMPS ATP-PPase domain occupies 203-395; the sequence is WIMSNHIEEA…LGLPPEMVYR (193 aa). ATP is bound at residue 230–236; that stretch reads SGGVDSS.

In terms of assembly, homodimer.

The enzyme catalyses XMP + L-glutamine + ATP + H2O = GMP + L-glutamate + AMP + diphosphate + 2 H(+). The protein operates within purine metabolism; GMP biosynthesis; GMP from XMP (L-Gln route): step 1/1. Catalyzes the synthesis of GMP from XMP. In Burkholderia ambifaria (strain MC40-6), this protein is GMP synthase [glutamine-hydrolyzing].